Consider the following 428-residue polypeptide: 3-phosphoshikimate 1-carboxyvinyltransferase (428 aa).

Residues K23, S24, and R28 each coordinate 3-phosphoshikimate. Position 23 (K23) interacts with phosphoenolpyruvate. Phosphoenolpyruvate-binding residues include G97 and R125. 3-phosphoshikimate-binding residues include S170, S171, Q172, S198, D314, N337, and K341. Q172 is a binding site for phosphoenolpyruvate. D314 serves as the catalytic Proton acceptor. Phosphoenolpyruvate contacts are provided by R345, R387, and K412.

The protein belongs to the EPSP synthase family. In terms of assembly, monomer.

The protein resides in the cytoplasm. The catalysed reaction is 3-phosphoshikimate + phosphoenolpyruvate = 5-O-(1-carboxyvinyl)-3-phosphoshikimate + phosphate. It participates in metabolic intermediate biosynthesis; chorismate biosynthesis; chorismate from D-erythrose 4-phosphate and phosphoenolpyruvate: step 6/7. In terms of biological role, catalyzes the transfer of the enolpyruvyl moiety of phosphoenolpyruvate (PEP) to the 5-hydroxyl of shikimate-3-phosphate (S3P) to produce enolpyruvyl shikimate-3-phosphate and inorganic phosphate. The chain is 3-phosphoshikimate 1-carboxyvinyltransferase from Edwardsiella ictaluri (strain 93-146).